We begin with the raw amino-acid sequence, 379 residues long: Lipid-A-disaccharide synthase (379 aa).

The protein belongs to the LpxB family.

It carries out the reaction a lipid X + a UDP-2-N,3-O-bis[(3R)-3-hydroxyacyl]-alpha-D-glucosamine = a lipid A disaccharide + UDP + H(+). The protein operates within bacterial outer membrane biogenesis; LPS lipid A biosynthesis. In terms of biological role, condensation of UDP-2,3-diacylglucosamine and 2,3-diacylglucosamine-1-phosphate to form lipid A disaccharide, a precursor of lipid A, a phosphorylated glycolipid that anchors the lipopolysaccharide to the outer membrane of the cell. The polypeptide is Lipid-A-disaccharide synthase (Idiomarina loihiensis (strain ATCC BAA-735 / DSM 15497 / L2-TR)).